A 994-amino-acid chain; its full sequence is Valine--tRNA ligase (994 aa).

The 'HIGH' region motif lies at 43-53 (PNVTGTLHMGH). The interval 332–356 (IASGATSDTTDTPSDSDASNASNQH) is disordered. Over residues 333-353 (ASGATSDTTDTPSDSDASNAS) the composition is skewed to low complexity. A 'KMSKS' region motif is present at residues 585–589 (KMSKS). An ATP-binding site is contributed by Lys588. The disordered stretch occupies residues 691–713 (TAHSPAQHQAGQDGQDVPRTPQP). Positions 928–994 (LIDVDAERAR…NGLRERRTTL (67 aa)) form a coiled coil.

Belongs to the class-I aminoacyl-tRNA synthetase family. ValS type 1 subfamily. As to quaternary structure, monomer.

Its subcellular location is the cytoplasm. The catalysed reaction is tRNA(Val) + L-valine + ATP = L-valyl-tRNA(Val) + AMP + diphosphate. In terms of biological role, catalyzes the attachment of valine to tRNA(Val). As ValRS can inadvertently accommodate and process structurally similar amino acids such as threonine, to avoid such errors, it has a 'posttransfer' editing activity that hydrolyzes mischarged Thr-tRNA(Val) in a tRNA-dependent manner. The protein is Valine--tRNA ligase of Xylella fastidiosa (strain M23).